The following is a 198-amino-acid chain: Sulfite reductase, dissimilatory-type subunit alpha (198 aa).

[4Fe-4S] cluster-binding residues include C45, C64, C67, and C70. Positions 55–83 (GTLSIDNKNCTRCMHCINTMPRALKIGDE) constitute a 4Fe-4S ferredoxin-type domain.

In terms of assembly, heterohexamer of two alpha, two beta and two gamma subunits.

Its function is as follows. Part of the complex that catalyzes the reduction of sulfite to sulfide. The alpha and beta subunits may have arisen by gene duplication. They both bind 2 iron-sulfur clusters, but the alpha subunit seems to be catalytically inactive, due to substitutions along the putative substrate access channel, and because it binds sirohydrochlorin (the dematallated form of siroheme) instead of siroheme. The polypeptide is Sulfite reductase, dissimilatory-type subunit alpha (dsrA) (Megalodesulfovibrio gigas (strain ATCC 19364 / DSM 1382 / NCIMB 9332 / VKM B-1759) (Desulfovibrio gigas)).